Reading from the N-terminus, the 258-residue chain is Indole-3-glycerol phosphate synthase (258 aa).

This sequence belongs to the TrpC family.

The catalysed reaction is 1-(2-carboxyphenylamino)-1-deoxy-D-ribulose 5-phosphate + H(+) = (1S,2R)-1-C-(indol-3-yl)glycerol 3-phosphate + CO2 + H2O. It functions in the pathway amino-acid biosynthesis; L-tryptophan biosynthesis; L-tryptophan from chorismate: step 4/5. This is Indole-3-glycerol phosphate synthase from Legionella pneumophila (strain Lens).